We begin with the raw amino-acid sequence, 395 residues long: Calreticulin (395 aa).

Positions 1–15 are cleaved as a signal peptide; the sequence is MKSLCLLAIVAVVSA. Cysteine 101 and cysteine 133 form a disulfide bridge. 4 residues coordinate an alpha-D-glucoside: tyrosine 105, lysine 107, tyrosine 124, and aspartate 131. Tandem repeats lie at residues 186–197, 205–216, 222–233, 239–250, 254–264, 268–278, and 282–292. Residues 186–250 form a 4 X approximate repeats region; the sequence is AQTGSLEEDW…DAKKPEDWDD (65 aa). The interval 193–301 is P-domain; sequence EDWDLLPAKK…PEYTPDDELY (109 aa). Residues 202 to 212 show a composition bias toward basic and acidic residues; it reads KIKDPDAKKPE. The disordered stretch occupies residues 202–255; that stretch reads KIKDPDAKKPEDWDEREYIDDAEDAKPEDWEKPEHIPDPDAKKPEDWDDEMDGE. The span at 213–224 shows a compositional bias: acidic residues; the sequence is DWDEREYIDDAE. The segment covering 225 to 246 has biased composition (basic and acidic residues); it reads DAKPEDWEKPEHIPDPDAKKPE. Positions 254 to 292 are 3 X approximate repeats; that stretch reads GEWEPPMIDNPEYKGEWKPKQIKNPAYKGKWIHPEIENP. Positions 302–395 are C-domain; it reads SYESWGAIGF…KEEEEGHDEL (94 aa). Aspartate 312 provides a ligand contact to an alpha-D-glucoside. Basic and acidic residues predominate over residues 340–380; the sequence is ETFDKLKTVEKEKKEKADEETRKAEEEARKKAEEEKEAKKD. The disordered stretch occupies residues 340–395; sequence ETFDKLKTVEKEKKEKADEETRKAEEEARKKAEEEKEAKKDDDEEEKEEEEGHDEL. The span at 381-395 shows a compositional bias: acidic residues; sequence DDEEEKEEEEGHDEL. The short motif at 392 to 395 is the Prevents secretion from ER element; that stretch reads HDEL.

It belongs to the calreticulin family. Cleaved by caspase ced-3 in vitro.

It localises to the endoplasmic reticulum lumen. In terms of biological role, molecular calcium-binding chaperone promoting folding, oligomeric assembly and quality control in the endoplasmic reticulum (ER) via the calreticulin/calnexin cycle. This lectin may interact transiently with almost all of the monoglucosylated glycoproteins that are synthesized in the ER. Probably by controlling the folding of extracellular matrix protein unc-52/Perlecan, may play a role in the formation of fibrous organelles, a hemidesmosome-like structure attaching muscles to the epidermis. Protects dopaminergic neurons against oxidative stress-induced neurodegeneration. May play a role in protection against ER stress. Plays a role in modulating lifespan, acting by influencing ER calcium homeostasis. The chain is Calreticulin (crt-1) from Caenorhabditis elegans.